The following is a 310-amino-acid chain: B3 domain-containing transcription factor NGA1 (310 aa).

The disordered stretch occupies residues 1–26; it reads MMTDLSLTRDEDEEEAKPLAEEEGAR. Basic and acidic residues predominate over residues 16–26; it reads AKPLAEEEGAR. The segment at residues 35 to 141 is a DNA-binding region (TF-B3); that stretch reads FDKVVTPSDV…RLFIDWRRRP (107 aa). Residues 251 to 268 are compositionally biased toward low complexity; it reads ESGMTNSTEEESSSSGGS. The segment at 251 to 310 is disordered; it reads ESGMTNSTEEESSSSGGSLPRGGGGGASSSSFFQLRLGSSSEDDHFTKKGKSSLSFDLDQ.

Interacts with BRX. Interacts with BZIP30.

It localises to the nucleus. Regulates lateral organ growth. Functionally redundant with NGA2, NGA3 and NGA4. In Arabidopsis thaliana (Mouse-ear cress), this protein is B3 domain-containing transcription factor NGA1 (NGA1).